We begin with the raw amino-acid sequence, 410 residues long: Zinc transporter ttm-1 (410 aa).

2 stretches are compositionally biased toward low complexity: residues 1-13 (MTISMISPSSIRL) and 35-46 (SVSSSDSGVSAD). The segment at 1-94 (MTISMISPSS…GAHKHSHDEK (94 aa)) is disordered. Residues 1–103 (MTISMISPSS…KYQKGRRAEK (103 aa)) lie on the Cytoplasmic side of the membrane. Positions 50-69 (HHHHGHGHGHSHGGHGHSHT) are enriched in basic residues. The helical transmembrane segment at 104–124 (VLWAVAALSAVFIAAEFVGGF) threads the bilayer. The Extracellular portion of the chain corresponds to 125–129 (WAQSL). The helical transmembrane segment at 130 to 150 (AIMTDAGHMLSDLLSFIISIF) threads the bilayer. Over 151-171 (AIRCARLPASKRLSFGYERAE) the chain is Cytoplasmic. A helical transmembrane segment spans residues 172–192 (VLGALTSVIILWVLTTVLVVV). Residues 193 to 208 (AIQRIVNNEHEVDADV) are Extracellular-facing. The helical transmembrane segment at 209-229 (MLITAGVGVLFNIVMGLVLHF) threads the bilayer. The Cytoplasmic portion of the chain corresponds to 230–258 (GTGGHGHTHGGHSSHGHAHDGKNVNVRAA). The helical transmembrane segment at 259 to 279 (LIHVIGDLVQSIGVLIAALII) threads the bilayer. Arg280 is a topological domain (extracellular). Residues 281–301 (FTGWTLADPICTFLFSIIVLF) traverse the membrane as a helical segment. Residues 302-410 (TTVTVMRDIF…CDTCQQQETA (109 aa)) are Cytoplasmic-facing.

The protein belongs to the cation diffusion facilitator (CDF) transporter (TC 2.A.4) family. SLC30A subfamily. Isoform a: Expressed in the hypodermis and the intestine. Isoform b: Expressed in the intestine, head neurons, seam cells, hypodermis, and the vulva.

The protein resides in the cytoplasmic vesicle membrane. It is found in the apical cell membrane. Promotes excretion of zinc from intestinal cells into the intestinal lumen in response to increased dietary zinc. Involved in cadmium resistance, possibly by promoting its transport from cells. Involved in resistance to B.thuringiensis pore-forming toxin Cry5B downstream of the sek-1 and pmk-1 MAPK kinase pathway. The sequence is that of Zinc transporter ttm-1 from Caenorhabditis elegans.